The sequence spans 156 residues: Transcription antitermination protein NusB (156 aa).

It belongs to the NusB family.

In terms of biological role, involved in transcription antitermination. Required for transcription of ribosomal RNA (rRNA) genes. Binds specifically to the boxA antiterminator sequence of the ribosomal RNA (rrn) operons. This chain is Transcription antitermination protein NusB, found in Bartonella tribocorum (strain CIP 105476 / IBS 506).